We begin with the raw amino-acid sequence, 58 residues long: Ribosome modulation factor (58 aa).

Belongs to the ribosome modulation factor family.

Its subcellular location is the cytoplasm. Functionally, during stationary phase, converts 70S ribosomes to an inactive dimeric form (100S ribosomes). This chain is Ribosome modulation factor, found in Shewanella amazonensis (strain ATCC BAA-1098 / SB2B).